The primary structure comprises 360 residues: DNA replication and repair protein RecF (360 aa).

30–37 contacts ATP; that stretch reads GQNGSGKT.

This sequence belongs to the RecF family.

The protein resides in the cytoplasm. Functionally, the RecF protein is involved in DNA metabolism; it is required for DNA replication and normal SOS inducibility. RecF binds preferentially to single-stranded, linear DNA. It also seems to bind ATP. The chain is DNA replication and repair protein RecF from Shewanella baltica (strain OS223).